The sequence spans 154 residues: Protein LOL1 (154 aa).

3 putative zinc finger regions span residues 34–64 (QLVC…VTAV), 73–103 (QLVC…VNLA), and 111–141 (HVNC…VTSV).

The protein resides in the nucleus. Its function is as follows. Positive regulator of reactive oxygen-induced cell death. May be involved in the repression of the copper/zinc superoxide dismutase CSD1 and CSD2 that detoxify accumulating superoxide before the reactive oxygen species (ROS) can trigger a cell death cascade. LSD1 and LOL1 have antagonistic effects on CSD1 and CSD2 accumulation to regulate oxidative stress-induced cell death. The protein is Protein LOL1 (LOL1) of Arabidopsis thaliana (Mouse-ear cress).